The chain runs to 617 residues: Leucine aminopeptidase 2 (617 aa).

Residues 139–141 (QCQ) and 271–276 (PYGGME) contribute to the a peptide site. His300 is a binding site for Zn(2+). Glu301 functions as the Proton acceptor in the catalytic mechanism. Zn(2+) is bound by residues His304 and Glu323. Catalysis depends on Tyr388, which acts as the Proton donor.

It belongs to the peptidase M1 family. Zn(2+) serves as cofactor.

The protein localises to the cytoplasm. The protein resides in the nucleus. It carries out the reaction an epoxide + H2O = an ethanediol. Functionally, aminopeptidase that preferentially cleaves di- and tripeptides. Also has low epoxide hydrolase activity (in vitro). Can hydrolyze the epoxide leukotriene LTA(4) but it forms preferentially 5,6-dihydroxy-7,9,11,14-eicosatetraenoic acid rather than the cytokine leukotriene B(4) as the product compared to the homologous mammalian enzyme (in vitro). The chain is Leucine aminopeptidase 2 from Aspergillus terreus (strain NIH 2624 / FGSC A1156).